The sequence spans 152 residues: uncharacterized protein (152 aa).

The protein belongs to the antirestriction protein family.

This is an uncharacterized protein from Escherichia coli (strain K12).